The sequence spans 177 residues: Interleukin-1 receptor antagonist protein (177 aa).

The N-terminal stretch at 1-25 (MEIRRRSVRHLISLLLFLFYSETAC) is a signal peptide. A disulfide bridge connects residues C91 and C141. N109 is a glycosylation site (N-linked (GlcNAc...) asparagine).

It belongs to the IL-1 family.

It is found in the secreted. In terms of biological role, anti-inflammatory antagonist of interleukin-1 family of proinflammatory cytokines such as interleukin-1beta/IL1B and interleukin-1alpha/IL1A. Protects from immune dysregulation and uncontrolled systemic inflammation triggered by IL1 for a range of innate stimulatory agents such as pathogens. The protein is Interleukin-1 receptor antagonist protein (IL1RN) of Equus caballus (Horse).